Consider the following 47-residue polypeptide: Delta-actitoxin-Axm1g (47 aa).

3 cysteine pairs are disulfide-bonded: C4–C44, C6–C34, and C27–C45.

It belongs to the sea anemone sodium channel inhibitory toxin family. Type I subfamily.

It is found in the secreted. Its subcellular location is the nematocyst. The sequence is that of Delta-actitoxin-Axm1g from Anthopleura xanthogrammica (Giant green sea anemone).